Consider the following 194-residue polypeptide: Holliday junction branch migration complex subunit RuvA (194 aa).

The domain I stretch occupies residues 1-64 (MIGRLRGVLT…DDSAALYGFL (64 aa)). Positions 65 to 140 (SESERRLFRH…RAADFNNGIS (76 aa)) are domain II. Positions 140–144 (STSGK) are flexible linker. The domain III stretch occupies residues 145–194 (LNLDTVSEAALALQQLGYKPAEAARMARDAGTESDDVATVIKKALQAALC).

This sequence belongs to the RuvA family. Homotetramer. Forms an RuvA(8)-RuvB(12)-Holliday junction (HJ) complex. HJ DNA is sandwiched between 2 RuvA tetramers; dsDNA enters through RuvA and exits via RuvB. An RuvB hexamer assembles on each DNA strand where it exits the tetramer. Each RuvB hexamer is contacted by two RuvA subunits (via domain III) on 2 adjacent RuvB subunits; this complex drives branch migration. In the full resolvosome a probable DNA-RuvA(4)-RuvB(12)-RuvC(2) complex forms which resolves the HJ.

It localises to the cytoplasm. Functionally, the RuvA-RuvB-RuvC complex processes Holliday junction (HJ) DNA during genetic recombination and DNA repair, while the RuvA-RuvB complex plays an important role in the rescue of blocked DNA replication forks via replication fork reversal (RFR). RuvA specifically binds to HJ cruciform DNA, conferring on it an open structure. The RuvB hexamer acts as an ATP-dependent pump, pulling dsDNA into and through the RuvAB complex. HJ branch migration allows RuvC to scan DNA until it finds its consensus sequence, where it cleaves and resolves the cruciform DNA. The chain is Holliday junction branch migration complex subunit RuvA from Xylella fastidiosa (strain M12).